The primary structure comprises 247 residues: DNA repair protein RecO (247 aa).

This sequence belongs to the RecO family.

Involved in DNA repair and RecF pathway recombination. The chain is DNA repair protein RecO from Alkalilimnicola ehrlichii (strain ATCC BAA-1101 / DSM 17681 / MLHE-1).